The chain runs to 202 residues: Small ribosomal subunit protein uS4c (202 aa).

Residues methionine 90–lysine 158 form the S4 RNA-binding domain.

Belongs to the universal ribosomal protein uS4 family. In terms of assembly, part of the 30S ribosomal subunit. Contacts protein S5. The interaction surface between S4 and S5 is involved in control of translational fidelity.

Its subcellular location is the plastid. It localises to the chloroplast. Functionally, one of the primary rRNA binding proteins, it binds directly to 16S rRNA where it nucleates assembly of the body of the 30S subunit. With S5 and S12 plays an important role in translational accuracy. The protein is Small ribosomal subunit protein uS4c (rps4) of Marchantia romanica (Liverwort).